Reading from the N-terminus, the 127-residue chain is Large-conductance mechanosensitive channel (127 aa).

3 consecutive transmembrane segments (helical) span residues 9 to 29, 32 to 52, and 75 to 95; these read EFAM…GVAF, IVTA…LGGI, and VIDF…INLL.

It belongs to the MscL family. Homopentamer.

It is found in the cell inner membrane. Channel that opens in response to stretch forces in the membrane lipid bilayer. May participate in the regulation of osmotic pressure changes within the cell. This chain is Large-conductance mechanosensitive channel, found in Legionella pneumophila (strain Paris).